A 173-amino-acid chain; its full sequence is Transcriptional regulator ERG homolog (173 aa).

The ETS DNA-binding region spans 1-84 (SGQIQLWQFL…HGKRYAYKFD (84 aa)).

Belongs to the ETS family.

It localises to the nucleus. Acts as a transcriptional activator. This chain is Transcriptional regulator ERG homolog (ERG), found in Lytechinus variegatus (Green sea urchin).